Reading from the N-terminus, the 185-residue chain is MSKEVLNDAEQRMTKATEALGRELAKLRAGRANPAMLDRITVEYYGAETPLNQLATISVPEARLLVIQPFDKSSISDIERAIQKSDLGLTPSNDGTVIRITIPPLTEERRRDLTKLVKKSAEEAKVAVRNIRRDANDDLKKRQKDGELTEDDLRRVTEDVQKLTDKYIEQIDQKAEAKEKEIMEV.

The protein belongs to the RRF family.

The protein resides in the cytoplasm. In terms of biological role, responsible for the release of ribosomes from messenger RNA at the termination of protein biosynthesis. May increase the efficiency of translation by recycling ribosomes from one round of translation to another. In Halalkalibacterium halodurans (strain ATCC BAA-125 / DSM 18197 / FERM 7344 / JCM 9153 / C-125) (Bacillus halodurans), this protein is Ribosome-recycling factor.